A 1573-amino-acid chain; its full sequence is Mediator of RNA polymerase II transcription subunit 1 (1573 aa).

An LXXLL motif 1 motif is present at residues Leu588–Leu592. 3 disordered regions span residues Thr595–Phe691, Ser774–Phe883, and Leu928–Asp1564. Over residues Pro606–Ser617 the composition is skewed to pro residues. The LXXLL motif 2 signature appears at Leu629–Leu633. Over residues Glu651–Ser668 the composition is skewed to polar residues. Residues Thr678–Phe691 are compositionally biased toward basic and acidic residues. 3 stretches are compositionally biased toward polar residues: residues Arg791–Phe804, Gly835–Phe864, and Gln934–Leu944. Positions Leu949–Glu961 are enriched in basic and acidic residues. Over residues Gly963–Ser973 the composition is skewed to gly residues. 5 stretches are compositionally biased toward low complexity: residues Pro1025–Gly1038, Lys1053–Ser1085, Ser1092–Gly1116, Ser1124–Lys1143, and Ser1155–Ser1164. Positions Met1176–Ser1193 are enriched in polar residues. Residues Leu1226 to Ser1277 show a composition bias toward low complexity. Residues Gly1278 to Lys1290 show a composition bias toward polar residues. Residues Pro1350–Lys1362 are compositionally biased toward basic and acidic residues. Polar residues-rich tracts occupy residues Ser1420–Thr1435 and Pro1443–Asp1457. The segment covering Glu1461–Ser1471 has biased composition (low complexity). The segment covering Lys1496–Lys1505 has biased composition (basic residues). A compositionally biased stretch (basic and acidic residues) spans Arg1506–Lys1518.

It belongs to the Mediator complex subunit 1 family. In terms of assembly, component of the Mediator complex.

It localises to the nucleus. Component of the Mediator complex, a coactivator involved in the regulated transcription of nearly all RNA polymerase II-dependent genes. Mediator functions as a bridge to convey information from gene-specific regulatory proteins to the basal RNA polymerase II transcription machinery. Mediator is recruited to promoters by direct interactions with regulatory proteins and serves as a scaffold for the assembly of a functional preinitiation complex with RNA polymerase II and the general transcription factors. In Xenopus tropicalis (Western clawed frog), this protein is Mediator of RNA polymerase II transcription subunit 1 (med1).